We begin with the raw amino-acid sequence, 322 residues long: NADH-quinone oxidoreductase subunit H (322 aa).

9 helical membrane passes run F15–V35, N50–F69, F81–I101, I114–G134, A149–A169, I186–V206, F237–F257, I265–I285, and W302–V322.

It belongs to the complex I subunit 1 family. NDH-1 is composed of 13 different subunits. Subunits NuoA, H, J, K, L, M, N constitute the membrane sector of the complex.

It is found in the cell membrane. The enzyme catalyses a quinone + NADH + 5 H(+)(in) = a quinol + NAD(+) + 4 H(+)(out). NDH-1 shuttles electrons from NADH, via FMN and iron-sulfur (Fe-S) centers, to quinones in the respiratory chain. The immediate electron acceptor for the enzyme in this species is believed to be ubiquinone. Couples the redox reaction to proton translocation (for every two electrons transferred, four hydrogen ions are translocated across the cytoplasmic membrane), and thus conserves the redox energy in a proton gradient. This subunit may bind ubiquinone. This Buchnera aphidicola subsp. Acyrthosiphon pisum (strain 5A) protein is NADH-quinone oxidoreductase subunit H.